The following is a 679-amino-acid chain: UvrABC system protein B (679 aa).

The Helicase ATP-binding domain maps to 31–414; that stretch reads ENLTDGLAHQ…ELEKSGTEII (384 aa). Position 44–51 (44–51) interacts with ATP; the sequence is GVTGSGKT. The Beta-hairpin motif lies at 97–120; it reads YYDYYQPEAYVPSSDTFIEKDASI. The Helicase C-terminal domain occupies 436–589; the sequence is QVDDLLSEAR…QIKYNEEHGI (154 aa). In terms of domain architecture, UVR spans 639-674; it reads QQQIKKLEQQMYKFAQDLEFEKAAAIRDQLHQLREQ.

This sequence belongs to the UvrB family. As to quaternary structure, forms a heterotetramer with UvrA during the search for lesions. Interacts with UvrC in an incision complex.

It localises to the cytoplasm. Its function is as follows. The UvrABC repair system catalyzes the recognition and processing of DNA lesions. A damage recognition complex composed of 2 UvrA and 2 UvrB subunits scans DNA for abnormalities. Upon binding of the UvrA(2)B(2) complex to a putative damaged site, the DNA wraps around one UvrB monomer. DNA wrap is dependent on ATP binding by UvrB and probably causes local melting of the DNA helix, facilitating insertion of UvrB beta-hairpin between the DNA strands. Then UvrB probes one DNA strand for the presence of a lesion. If a lesion is found the UvrA subunits dissociate and the UvrB-DNA preincision complex is formed. This complex is subsequently bound by UvrC and the second UvrB is released. If no lesion is found, the DNA wraps around the other UvrB subunit that will check the other stand for damage. This Haemophilus influenzae (strain 86-028NP) protein is UvrABC system protein B.